The chain runs to 936 residues: Isoleucine--tRNA ligase (936 aa).

The short motif at 58 to 68 (PYANGRAHLGT) is the 'HIGH' region element. Position 561 (Glu561) interacts with L-isoleucyl-5'-AMP. Residues 602–606 (KMSKS) carry the 'KMSKS' region motif. Residue Lys605 participates in ATP binding. Zn(2+) is bound by residues Cys899, Cys902, Cys919, and Cys922.

This sequence belongs to the class-I aminoacyl-tRNA synthetase family. IleS type 1 subfamily. In terms of assembly, monomer. Requires Zn(2+) as cofactor.

Its subcellular location is the cytoplasm. The catalysed reaction is tRNA(Ile) + L-isoleucine + ATP = L-isoleucyl-tRNA(Ile) + AMP + diphosphate. In terms of biological role, catalyzes the attachment of isoleucine to tRNA(Ile). As IleRS can inadvertently accommodate and process structurally similar amino acids such as valine, to avoid such errors it has two additional distinct tRNA(Ile)-dependent editing activities. One activity is designated as 'pretransfer' editing and involves the hydrolysis of activated Val-AMP. The other activity is designated 'posttransfer' editing and involves deacylation of mischarged Val-tRNA(Ile). The polypeptide is Isoleucine--tRNA ligase (Coxiella burnetii (strain CbuG_Q212) (Coxiella burnetii (strain Q212))).